A 298-amino-acid chain; its full sequence is tRNA-cytidine(32) 2-sulfurtransferase (298 aa).

Residues 1 to 26 form a disordered region; that stretch reads MTAVISLPDPPQRASRGPRVAGPGQD. The PP-loop motif motif lies at 57-62; sequence SGGKDS. 3 residues coordinate [4Fe-4S] cluster: cysteine 132, cysteine 135, and cysteine 223.

This sequence belongs to the TtcA family. As to quaternary structure, homodimer. The cofactor is Mg(2+). Requires [4Fe-4S] cluster as cofactor.

It is found in the cytoplasm. The catalysed reaction is cytidine(32) in tRNA + S-sulfanyl-L-cysteinyl-[cysteine desulfurase] + AH2 + ATP = 2-thiocytidine(32) in tRNA + L-cysteinyl-[cysteine desulfurase] + A + AMP + diphosphate + H(+). Its pathway is tRNA modification. Its function is as follows. Catalyzes the ATP-dependent 2-thiolation of cytidine in position 32 of tRNA, to form 2-thiocytidine (s(2)C32). The sulfur atoms are provided by the cysteine/cysteine desulfurase (IscS) system. The sequence is that of tRNA-cytidine(32) 2-sulfurtransferase from Stenotrophomonas maltophilia (strain R551-3).